The primary structure comprises 503 residues: Secreted RxLR effector protein RXLR-C08 (503 aa).

The first 22 residues, 1–22 (MRLCGVASAFLSTLILIAHIDA), serve as a signal peptide directing secretion. 3 N-linked (GlcNAc...) asparagine glycosylation sites follow: N27, N35, and N45. The short motif at 57–60 (DEER) is the dEER element. 3 N-linked (GlcNAc...) asparagine glycosylation sites follow: N108, N197, and N374.

It belongs to the RxLR effector family.

Its subcellular location is the secreted. The protein resides in the host Golgi apparatus. Functionally, secreted effector that suppresses pattern-triggered immunity (PTI) in plant host. The sequence is that of Secreted RxLR effector protein RXLR-C08 from Plasmopara halstedii (Downy mildew of sunflower).